Here is a 224-residue protein sequence, read N- to C-terminus: Propanediol dehydratase medium subunit (224 aa).

The interval 1-18 (MEINEKLLRQIIEDVLRD) is targets protein to the BMC.

It belongs to the diol/glycerol dehydratase medium subunit family. The propanediol dehydratase enzyme is a heterotrimeric complex composed of a large (PduC), a medium (PduD) and a small (PduE) subunit. Adenosylcob(III)alamin is required as a cofactor.

Its subcellular location is the bacterial microcompartment. It carries out the reaction propane-1,2-diol = propanal + H2O. It participates in polyol metabolism; 1,2-propanediol degradation. With respect to regulation, inhibited by glycerol. Functionally, part of the PduCDE complex that catalyzes the dehydration of 1,2-propanediol (1,2-PD) to propionaldehyde. Required for S.typhimurium growth on 1,2-PD as the sole carbon and energy source. This subunit is directly targeted to the bacterial microcompartment (BMC) dedicated to 1,2-PD degradation, and is also responsible for targeting the other 2 subunits (pduC and pduE). Its function is as follows. The 1,2-PD-specific bacterial microcompartment (BMC) concentrates low levels of 1,2-PD catabolic enzymes, concentrates volatile reaction intermediates thus enhancing pathway flux and keeps the level of toxic, mutagenic propionaldehyde low. The sequence is that of Propanediol dehydratase medium subunit from Salmonella typhimurium (strain LT2 / SGSC1412 / ATCC 700720).